The primary structure comprises 66 residues: DNA gyrase inhibitor YacG (66 aa).

Residues Cys9, Cys12, Cys28, and Cys32 each coordinate Zn(2+). The segment at 45–66 (HKIAGSQESEDELYSGDLEPRH) is disordered.

It belongs to the DNA gyrase inhibitor YacG family. As to quaternary structure, interacts with GyrB. Requires Zn(2+) as cofactor.

Its function is as follows. Inhibits all the catalytic activities of DNA gyrase by preventing its interaction with DNA. Acts by binding directly to the C-terminal domain of GyrB, which probably disrupts DNA binding by the gyrase. In Pseudomonas putida (strain W619), this protein is DNA gyrase inhibitor YacG.